Consider the following 566-residue polypeptide: Beta,beta-carotene 15,15'-dioxygenase (566 aa).

Fe cation contacts are provided by histidine 172, histidine 237, histidine 308, and histidine 514. The tract at residues threonine 529 to leucine 566 is disordered.

It belongs to the carotenoid oxygenase family. Requires Fe(2+) as cofactor.

It is found in the cytoplasm. It localises to the cytosol. The catalysed reaction is all-trans-beta-carotene + O2 = 2 all-trans-retinal. It functions in the pathway cofactor metabolism; retinol metabolism. In terms of biological role, symmetrically cleaves beta-carotene into two molecules of retinal using a dioxygenase mechanism. The polypeptide is Beta,beta-carotene 15,15'-dioxygenase (Rattus norvegicus (Rat)).